We begin with the raw amino-acid sequence, 110 residues long: MGQNDLVKTLRMNYLFDFYQSLLTNKQKNYLEFFYLQDYSLSEIADTFEVSRQAVYDNIRRTGDLVEDYESKLRLYQRFEKRRELYNLMKQSLNQPELLKQYITQLEELE.

Belongs to the UPF0122 family.

Functionally, might take part in the signal recognition particle (SRP) pathway. This is inferred from the conservation of its genetic proximity to ftsY/ffh. May be a regulatory protein. This Staphylococcus epidermidis (strain ATCC 12228 / FDA PCI 1200) protein is UPF0122 protein SE_0911.